A 161-amino-acid chain; its full sequence is C-type natriuretic peptide (161 aa).

The first 22 residues, 1–22 (MFASRLAALGLLLLALVLDGKP), serve as a signal peptide directing secretion. The tract at residues 19-135 (DGKPAPPPQP…GGGGSRRLKG (117 aa)) is disordered. The propeptide occupies 23-139 (APPPQPLRKA…SRRLKGLPKK (117 aa)). 2 stretches are compositionally biased toward low complexity: residues 29-60 (LRKA…SSGP) and 76-93 (AAPT…AASR). The span at 94–104 (LLRDLRPDGKQ) shows a compositional bias: basic and acidic residues. The segment covering 120 to 130 (GGGGGGGGGGS) has biased composition (gly residues). A disulfide bridge connects residues Cys145 and Cys161.

Belongs to the natriuretic peptide family. As to expression, expressed by the venom gland.

The protein resides in the secreted. Functionally, snake venom natriuretic peptide that has a vasorelaxant activity in rat aortic strips and a diuretic potency in anesthetized rats. May act by activating natriuretic receptors (NPR1 and/or NPR2). This chain is C-type natriuretic peptide, found in Rhabdophis tigrinus tigrinus (Tiger keelback snake).